Consider the following 86-residue polypeptide: MDPVDPNIEPWNHPGSQPKTACNRCHCKKCCYHCQVCFITKGLGISYGRKKRRQRRRPSQGGQTHQDPIPKQPSSQPRGDPTGPKE.

Positions 1 to 21 are disordered; sequence MDPVDPNIEPWNHPGSQPKTA. Residues 1 to 24 are interaction with human CREBBP; it reads MDPVDPNIEPWNHPGSQPKTACNR. The transactivation stretch occupies residues 1-48; that stretch reads MDPVDPNIEPWNHPGSQPKTACNRCHCKKCCYHCQVCFITKGLGISYG. 3 residues coordinate Zn(2+): Cys22, Cys25, and Cys27. The interval 22–37 is cysteine-rich; it reads CNRCHCKKCCYHCQVC. N6-acetyllysine; by host PCAF is present on Lys28. Zn(2+)-binding residues include Cys30, His33, Cys34, and Cys37. Residues 38–48 form a core region; it reads FITKGLGISYG. Residues 47–86 are disordered; that stretch reads YGRKKRRQRRRPSQGGQTHQDPIPKQPSSQPRGDPTGPKE. Over residues 48 to 58 the composition is skewed to basic residues; sequence GRKKRRQRRRP. Positions 49–57 match the Nuclear localization signal, RNA-binding (TAR), and protein transduction motif; that stretch reads RKKRRQRRR. Residues 49-86 are interaction with the host capping enzyme RNGTT; it reads RKKRRQRRRPSQGGQTHQDPIPKQPSSQPRGDPTGPKE. An N6-acetyllysine; by host EP300 and GCN5L2 mark is found at Lys50 and Lys51. Asymmetric dimethylarginine; by host PRMT6 occurs at positions 52 and 53. A compositionally biased stretch (polar residues) spans 60–77; the sequence is QGGQTHQDPIPKQPSSQP. A Glycyl lysine isopeptide (Lys-Gly) (interchain with G-Cter in ubiquitin) cross-link involves residue Lys71. The Cell attachment site motif lies at 78-80; that stretch reads RGD.

It belongs to the lentiviruses Tat family. In terms of assembly, interacts with host CCNT1. Associates with the P-TEFb complex composed at least of Tat, P-TEFb (CDK9 and CCNT1), TAR RNA, RNA Pol II. Recruits the HATs CREBBP, TAF1/TFIID, EP300, PCAF and GCN5L2. Interacts with host KAT5/Tip60; this interaction targets the latter to degradation. Interacts with the host deacetylase SIRT1. Interacts with host capping enzyme RNGTT; this interaction stimulates RNGTT. Binds to host KDR, and to the host integrins ITGAV/ITGB3 and ITGA5/ITGB1. Interacts with host KPNB1/importin beta-1 without previous binding to KPNA1/importin alpha-1. Interacts with EIF2AK2. Interacts with host nucleosome assembly protein NAP1L1; this interaction may be required for the transport of Tat within the nucleus, since the two proteins interact at the nuclear rim. Interacts with host C1QBP/SF2P32; this interaction involves lysine-acetylated Tat. Interacts with the host chemokine receptors CCR2, CCR3 and CXCR4. Interacts with host DPP4/CD26; this interaction may trigger an anti-proliferative effect. Interacts with host LDLR. Interacts with the host extracellular matrix metalloproteinase MMP1. Interacts with host PRMT6; this interaction mediates Tat's methylation. Interacts with, and is ubiquitinated by MDM2/Hdm2. Interacts with host PSMC3 and HTATIP2. Interacts with STAB1; this interaction may overcome SATB1-mediated repression of IL2 and IL2RA (interleukin) in T cells by binding to the same domain than HDAC1. Interacts (when acetylated) with human CDK13, thereby increasing HIV-1 mRNA splicing and promoting the production of the doubly spliced HIV-1 protein Nef. Interacts with host TBP; this interaction modulates the activity of transcriptional pre-initiation complex. Interacts with host RELA. Interacts with host PLSCR1; this interaction negatively regulates Tat transactivation activity by altering its subcellular distribution. Post-translationally, asymmetrical arginine methylation by host PRMT6 seems to diminish the transactivation capacity of Tat and affects the interaction with host CCNT1. In terms of processing, acetylation by EP300, CREBBP, GCN5L2/GCN5 and PCAF regulates the transactivation activity of Tat. EP300-mediated acetylation of Lys-50 promotes dissociation of Tat from the TAR RNA through the competitive binding to PCAF's bromodomain. In addition, the non-acetylated Tat's N-terminus can also interact with PCAF. PCAF-mediated acetylation of Lys-28 enhances Tat's binding to CCNT1. Lys-50 is deacetylated by SIRT1. Polyubiquitination by host MDM2 does not target Tat to degradation, but activates its transactivation function and fosters interaction with CCNT1 and TAR RNA. Post-translationally, phosphorylated by EIF2AK2 on serine and threonine residues adjacent to the basic region important for TAR RNA binding and function. Phosphorylation of Tat by EIF2AK2 is dependent on the prior activation of EIF2AK2 by dsRNA.

Its subcellular location is the host nucleus. It localises to the host nucleolus. It is found in the host cytoplasm. The protein localises to the secreted. In terms of biological role, transcriptional activator that increases RNA Pol II processivity, thereby increasing the level of full-length viral transcripts. Recognizes a hairpin structure at the 5'-LTR of the nascent viral mRNAs referred to as the transactivation responsive RNA element (TAR) and recruits the cyclin T1-CDK9 complex (P-TEFb complex) that will in turn hyperphosphorylate the RNA polymerase II to allow efficient elongation. The CDK9 component of P-TEFb and other Tat-activated kinases hyperphosphorylate the C-terminus of RNA Pol II that becomes stabilized and much more processive. Other factors such as HTATSF1/Tat-SF1, SUPT5H/SPT5, and HTATIP2 are also important for Tat's function. Besides its effect on RNA Pol II processivity, Tat induces chromatin remodeling of proviral genes by recruiting the histone acetyltransferases (HATs) CREBBP, EP300 and PCAF to the chromatin. This also contributes to the increase in proviral transcription rate, especially when the provirus integrates in transcriptionally silent region of the host genome. To ensure maximal activation of the LTR, Tat mediates nuclear translocation of NF-kappa-B by interacting with host RELA. Through its interaction with host TBP, Tat may also modulate transcription initiation. Tat can reactivate a latently infected cell by penetrating in it and transactivating its LTR promoter. In the cytoplasm, Tat is thought to act as a translational activator of HIV-1 mRNAs. Extracellular circulating Tat can be endocytosed by surrounding uninfected cells via the binding to several surface receptors such as CD26, CXCR4, heparan sulfate proteoglycans (HSPG) or LDLR. Neurons are rarely infected, but they internalize Tat via their LDLR. Through its interaction with nuclear HATs, Tat is potentially able to control the acetylation-dependent cellular gene expression. Modulates the expression of many cellular genes involved in cell survival, proliferation or in coding for cytokines or cytokine receptors. Tat plays a role in T-cell and neurons apoptosis. Tat induced neurotoxicity and apoptosis probably contribute to neuroAIDS. Circulating Tat also acts as a chemokine-like and/or growth factor-like molecule that binds to specific receptors on the surface of the cells, affecting many cellular pathways. In the vascular system, Tat binds to ITGAV/ITGB3 and ITGA5/ITGB1 integrins dimers at the surface of endothelial cells and competes with bFGF for heparin-binding sites, leading to an excess of soluble bFGF. In Human immunodeficiency virus type 1 group M subtype D (isolate Z2/CDC-Z34) (HIV-1), this protein is Protein Tat.